The sequence spans 193 residues: Potassium-transporting ATPase KdpC subunit (193 aa).

A helical membrane pass occupies residues 7-27 (PLVVLFVVLNAVTGLAYPAVM).

The protein belongs to the KdpC family. In terms of assembly, the system is composed of three essential subunits: KdpA, KdpB and KdpC.

It is found in the cell inner membrane. Functionally, part of the high-affinity ATP-driven potassium transport (or Kdp) system, which catalyzes the hydrolysis of ATP coupled with the electrogenic transport of potassium into the cytoplasm. This subunit acts as a catalytic chaperone that increases the ATP-binding affinity of the ATP-hydrolyzing subunit KdpB by the formation of a transient KdpB/KdpC/ATP ternary complex. The sequence is that of Potassium-transporting ATPase KdpC subunit from Burkholderia cenocepacia (strain HI2424).